The primary structure comprises 128 residues: Fumarate reductase subunit C (128 aa).

The next 3 membrane-spanning stretches (helical) occupy residues 31–51 (ATCIATIWFCLVLLYGVISLG), 67–87 (VVILNIISLAGLLYHAATLYV), and 106–126 (ILKNALWAITGLVSLLALVLV).

It belongs to the FrdC family. In terms of assembly, part of an enzyme complex containing four subunits: a flavoprotein (FrdA), an iron-sulfur protein (FrdB), and two hydrophobic anchor proteins (FrdC and FrdD).

It is found in the cell inner membrane. Anchors the catalytic components of the fumarate reductase complex to the cell membrane, binds quinones. The chain is Fumarate reductase subunit C from Haemophilus ducreyi (strain 35000HP / ATCC 700724).